We begin with the raw amino-acid sequence, 226 residues long: 7-cyano-7-deazaguanine synthase (226 aa).

8-18 (LSGGLDSTTTL) is a binding site for ATP. Zn(2+)-binding residues include Cys-188, Cys-198, Cys-201, and Cys-204.

Belongs to the QueC family. The cofactor is Zn(2+).

The catalysed reaction is 7-carboxy-7-deazaguanine + NH4(+) + ATP = 7-cyano-7-deazaguanine + ADP + phosphate + H2O + H(+). The protein operates within purine metabolism; 7-cyano-7-deazaguanine biosynthesis. In terms of biological role, catalyzes the ATP-dependent conversion of 7-carboxy-7-deazaguanine (CDG) to 7-cyano-7-deazaguanine (preQ(0)). This Nitrosomonas eutropha (strain DSM 101675 / C91 / Nm57) protein is 7-cyano-7-deazaguanine synthase.